A 469-amino-acid polypeptide reads, in one-letter code: Trehalose-6-phosphate synthase (469 aa).

R10 contributes to the D-glucose 6-phosphate binding site. UDP-alpha-D-glucose is bound at residue 22 to 23; it reads GG. Residues Y77 and D131 each contribute to the D-glucose 6-phosphate site. UDP-alpha-D-glucose is bound by residues R262 and K267. R300 is a binding site for D-glucose 6-phosphate. 365 to 369 contributes to the UDP-alpha-D-glucose binding site; the sequence is LVAKE.

This sequence belongs to the glycosyltransferase 20 family. Homotetramer.

The catalysed reaction is D-glucose 6-phosphate + UDP-alpha-D-glucose = alpha,alpha-trehalose 6-phosphate + UDP + H(+). It participates in glycan biosynthesis; trehalose biosynthesis. In terms of biological role, probably involved in the osmoprotection via the biosynthesis of trehalose. Catalyzes the transfer of glucose from UDP-alpha-D-glucose (UDP-Glc) to D-glucose 6-phosphate (Glc-6-P) to form trehalose-6-phosphate. Acts with retention of the anomeric configuration of the UDP-sugar donor. This is Trehalose-6-phosphate synthase from Sodalis glossinidius (strain morsitans).